A 275-amino-acid polypeptide reads, in one-letter code: Transmembrane protein 106B (275 aa).

Positions Met1–Thr24 are disordered. Gly2 carries N-myristoyl glycine lipidation. Residues Gly2 to Leu97 lie on the Cytoplasmic side of the membrane. The helical transmembrane segment at Tyr98–Phe118 threads the bilayer. At Pro119 to Gln275 the chain is on the lumenal side. N-linked (GlcNAc...) asparagine glycans are attached at residues Asn146, Asn152, Asn165, and Asn184. Cys215 and Cys254 form a disulfide bridge. The N-linked (GlcNAc...) asparagine glycan is linked to Asn257.

It belongs to the TMEM106 family. In terms of assembly, can form homomers. Interacts (via N-terminus) with MAP6 (via C-terminus). Interacts (via C-terminus) with the vacuolar-type ATPase subunit ATP6AP1. Interacts (via N-terminus) with AP2M1 and CLTC. Interacts with TMEM106C.

It localises to the late endosome membrane. Its subcellular location is the lysosome membrane. The protein localises to the cell membrane. Functionally, in neurons, involved in the transport of late endosomes/lysosomes. May be involved in dendrite morphogenesis and maintenance by regulating lysosomal trafficking. May act as a molecular brake for retrograde transport of late endosomes/lysosomes, possibly via its interaction with MAP6. In motoneurons, may mediate the axonal transport of lysosomes and axonal sorting at the initial segment. It remains unclear whether TMEM106B affects the transport of moving lysosomes in the anterograde or retrograde direction in neurites and whether it is particularly important in the sorting of lysosomes in axons or in dendrites. In neurons, may also play a role in the regulation of lysosomal size and responsiveness to stress. Required for proper lysosomal acidification. This chain is Transmembrane protein 106B (TMEM106B), found in Bos taurus (Bovine).